Here is a 43-residue protein sequence, read N- to C-terminus: GCKKDRKPCSYHADCCNCCLSGICAPSTNWILPGCSTSSFFKI.

Intrachain disulfides connect cysteine 2–cysteine 16, cysteine 9–cysteine 19, cysteine 15–cysteine 24, and cysteine 18–cysteine 35. Proline 8 is subject to 4-hydroxyproline. Proline 26 is modified (4-hydroxyproline). Position 30 is a 6'-bromotryptophan (tryptophan 30). A D-phenylalanine modification is found at phenylalanine 41.

It belongs to the conotoxin I1 superfamily. In terms of tissue distribution, expressed by the venom duct.

Its subcellular location is the secreted. Functionally, iota-conotoxins bind to voltage-gated sodium channels (Nav) and act as agonists by shifting the voltage-dependence of activation to more hyperpolarized levels. Produces general excitatory symptoms. In Conus figulinus (Fig cone), this protein is Iota-conotoxin-like Fi11.6.